Reading from the N-terminus, the 467-residue chain is 3-isopropylmalate dehydratase large subunit (467 aa).

Residues Cys-347, Cys-407, and Cys-410 each contribute to the [4Fe-4S] cluster site.

The protein belongs to the aconitase/IPM isomerase family. LeuC type 1 subfamily. Heterodimer of LeuC and LeuD. The cofactor is [4Fe-4S] cluster.

The enzyme catalyses (2R,3S)-3-isopropylmalate = (2S)-2-isopropylmalate. It functions in the pathway amino-acid biosynthesis; L-leucine biosynthesis; L-leucine from 3-methyl-2-oxobutanoate: step 2/4. In terms of biological role, catalyzes the isomerization between 2-isopropylmalate and 3-isopropylmalate, via the formation of 2-isopropylmaleate. In Synechococcus sp. (strain JA-3-3Ab) (Cyanobacteria bacterium Yellowstone A-Prime), this protein is 3-isopropylmalate dehydratase large subunit.